The following is a 799-amino-acid chain: MSYKVNSSYPDSIPPTEQPYMASQYKQDLQSNIAMATNSEQQRQQQQQQQQQQQQWINQPTAENSDLKEKMNCKNTLNEYIFDFLTKSSLKNTAAAFAQDAHLDRDKGQNPIDGPKSKENNGNQNTFSKVVDTPQGFLYEWWQIFWDIFNTSSSRGGSEFAQQYYQLVLQEQRQEQIYRSLAVHAARLQHDAERRGEYSNEDIDPMHLAAMMLGNPMAPAVQMRNVNMNPIPIPMVGNPIVNNFSIPPYNNANPTTGATAVAPTAPPSGDFTNVGPTQNRSQNVTGWPVYNYPMQPTTENPVGNPCNNNTTNNTTNNKSPVNQPKSLKTMHSTDKPNNVPTSKSTRSRSATSKAKGKVKAGLVAKRRRKNNTATVSAGSTNAGSPNITTPGSATSEPAMVGSRVNKTPRSDIATNFRNQAIIFGEEDIYSNSKSSPSLDGASPSALASKQPTKVRKNTKKASTSAFPVESTNKLGGNSVVTGKKRSPPNTRMSRRKSTPSVILNADATKDENNMLRTFSNTIAPNIHSAPPTKTANSLPFPGINLGSFNKPAVSSPLSSVTESCFDPESGKIAGKNGPKRAVNSKVSASSPLSIATPRSGDAQKQRSSKVPGNVVIKPPHGFSTTNLNITLKNSKIITSQNNTVSQELPNGGNILEAQVGNDSRSSKGNRNTLSTPEEKKPSSNNQGYDFDALKNSSSLLFPNQAYASNNRTPNENSNVADETSASTNSGDNDNTLIQPSSNVGTTLGPQQTSTNENQNVHSQNLKFGNIGMVEDQGPDYDLNLLDTNENDFNFINWEG.

7 disordered regions span residues 37–68 (TNSE…SDLK), 101–127 (AHLD…QNTF), 255–406 (TTGA…RVNK), 431–501 (NSKS…TPSV), 568–622 (ESGK…PHGF), 644–691 (VSQE…YDFD), and 705–758 (AYAS…NENQ). Positions 41–55 (QQRQQQQQQQQQQQQ) are enriched in low complexity. One can recognise a LisH domain in the interval 73–105 (CKNTLNEYIFDFLTKSSLKNTAAAFAQDAHLDR). The span at 270–285 (DFTNVGPTQNRSQNVT) shows a compositional bias: polar residues. Residues 307–317 (NNNTTNNTTNN) show a composition bias toward low complexity. Residues 318-340 (KSPVNQPKSLKTMHSTDKPNNVP) show a composition bias toward polar residues. Residues 341 to 353 (TSKSTRSRSATSK) are compositionally biased toward low complexity. Over residues 354-370 (AKGKVKAGLVAKRRRKN) the composition is skewed to basic residues. 2 stretches are compositionally biased toward polar residues: residues 371 to 395 (NTAT…SATS) and 460 to 480 (KAST…NSVV). Residues 482 to 497 (GKKRSPPNTRMSRRKS) are compositionally biased toward basic residues. Polar residues-rich tracts occupy residues 584–593 (SKVSASSPLS) and 660–675 (GNDS…TLST).

Belongs to the FLO8 family.

It localises to the nucleus. Functionally, required for diploid filamentous growth, haploid invasive growth and flocculation. Putative transcriptional activator of FLO1. The protein is Transcriptional activator FLO8 (FLO8) of Saccharomyces cerevisiae (strain Lalvin EC1118 / Prise de mousse) (Baker's yeast).